Reading from the N-terminus, the 187-residue chain is Probable chorismate pyruvate-lyase (187 aa).

Positions 77, 115, and 174 each coordinate substrate.

The protein belongs to the UbiC family.

The protein localises to the cytoplasm. The catalysed reaction is chorismate = 4-hydroxybenzoate + pyruvate. The protein operates within cofactor biosynthesis; ubiquinone biosynthesis. Its function is as follows. Removes the pyruvyl group from chorismate, with concomitant aromatization of the ring, to provide 4-hydroxybenzoate (4HB) for the ubiquinone pathway. The polypeptide is Probable chorismate pyruvate-lyase (Shewanella sp. (strain ANA-3)).